Reading from the N-terminus, the 58-residue chain is UPF0391 membrane protein Sbal195_1447 (58 aa).

2 helical membrane-spanning segments follow: residues leucine 6 to alanine 26 and alanine 28 to valine 48.

Belongs to the UPF0391 family.

It is found in the cell membrane. In Shewanella baltica (strain OS195), this protein is UPF0391 membrane protein Sbal195_1447.